Reading from the N-terminus, the 83-residue chain is ATP synthase subunit c (83 aa).

A run of 2 helical transmembrane segments spans residues 9–29 and 51–71; these read LICV…GIGI and MVFM…GLVI.

This sequence belongs to the ATPase C chain family. In terms of assembly, F-type ATPases have 2 components, F(1) - the catalytic core - and F(0) - the membrane proton channel. F(1) has five subunits: alpha(3), beta(3), gamma(1), delta(1), epsilon(1). F(0) has three main subunits: a(1), b(2) and c(10-14). The alpha and beta chains form an alternating ring which encloses part of the gamma chain. F(1) is attached to F(0) by a central stalk formed by the gamma and epsilon chains, while a peripheral stalk is formed by the delta and b chains.

It localises to the cell inner membrane. Its function is as follows. F(1)F(0) ATP synthase produces ATP from ADP in the presence of a proton or sodium gradient. F-type ATPases consist of two structural domains, F(1) containing the extramembraneous catalytic core and F(0) containing the membrane proton channel, linked together by a central stalk and a peripheral stalk. During catalysis, ATP synthesis in the catalytic domain of F(1) is coupled via a rotary mechanism of the central stalk subunits to proton translocation. In terms of biological role, key component of the F(0) channel; it plays a direct role in translocation across the membrane. A homomeric c-ring of between 10-14 subunits forms the central stalk rotor element with the F(1) delta and epsilon subunits. In Desulfotalea psychrophila (strain LSv54 / DSM 12343), this protein is ATP synthase subunit c.